Here is a 240-residue protein sequence, read N- to C-terminus: Uridylate kinase (240 aa).

12–15 (KLSG) is a binding site for ATP. Gly54 contacts UMP. 2 residues coordinate ATP: Gly55 and Arg59. Residues Asp74 and 135–142 (TGNPFFTT) each bind UMP. ATP is bound by residues Thr162, Tyr168, and Asp171.

It belongs to the UMP kinase family. As to quaternary structure, homohexamer.

The protein localises to the cytoplasm. The enzyme catalyses UMP + ATP = UDP + ADP. It participates in pyrimidine metabolism; CTP biosynthesis via de novo pathway; UDP from UMP (UMPK route): step 1/1. Its activity is regulated as follows. Inhibited by UTP. Its function is as follows. Catalyzes the reversible phosphorylation of UMP to UDP. In Xanthomonas campestris pv. campestris (strain ATCC 33913 / DSM 3586 / NCPPB 528 / LMG 568 / P 25), this protein is Uridylate kinase.